The sequence spans 815 residues: Translation initiation factor IF-2 (815 aa).

Positions 315–482 (ARPPVVTIMG…AISLTAEVLE (168 aa)) constitute a tr-type G domain. The interval 324–331 (GHVDHGKT) is G1. 324–331 (GHVDHGKT) serves as a coordination point for GTP. The interval 349–353 (GITQH) is G2. Residues 370 to 373 (DTPG) form a G3 region. Residues 370–374 (DTPGH) and 424–427 (NKID) contribute to the GTP site. The tract at residues 424–427 (NKID) is G4. Residues 460 to 462 (SAY) are G5.

The protein belongs to the TRAFAC class translation factor GTPase superfamily. Classic translation factor GTPase family. IF-2 subfamily.

It localises to the cytoplasm. Its function is as follows. One of the essential components for the initiation of protein synthesis. Protects formylmethionyl-tRNA from spontaneous hydrolysis and promotes its binding to the 30S ribosomal subunits. Also involved in the hydrolysis of GTP during the formation of the 70S ribosomal complex. This Ruthia magnifica subsp. Calyptogena magnifica protein is Translation initiation factor IF-2.